A 380-amino-acid chain; its full sequence is Endo-polygalacturonase (380 aa).

Positions 1 to 17 (MVHILSSALSLLRLGAA) are cleaved as a signal peptide. Residues 18 to 42 (VSAAPAPAPTAAPNVADALAAVEKR) constitute a propeptide that is removed on maturation. Cysteine 46 and cysteine 64 are oxidised to a cystine. PbH1 repeat units lie at residues 178 to 207 (ASGL…DVGS), 208 to 229 (STDI…AINS), 230 to 250 (GTGI…SIGS), 259 to 280 (VSDV…RIKT), 288 to 310 (VSGV…VIEQ), and 322 to 343 (TSGV…SSSA). Residue aspartate 222 is the Proton donor of the active site. Cysteine 224 and cysteine 240 are disulfide-bonded. The active site involves histidine 244. A disulfide bridge links cysteine 350 with cysteine 353. A glycan (N-linked (GlcNAc...) asparagine) is linked at asparagine 361. Cysteine 371 and cysteine 380 are disulfide-bonded.

This sequence belongs to the glycosyl hydrolase 28 family.

Its subcellular location is the secreted. The catalysed reaction is (1,4-alpha-D-galacturonosyl)n+m + H2O = (1,4-alpha-D-galacturonosyl)n + (1,4-alpha-D-galacturonosyl)m.. The protein is Endo-polygalacturonase (PG1) of Sclerotinia sclerotiorum (White mold).